A 444-amino-acid polypeptide reads, in one-letter code: Glutamyl-tRNA reductase (444 aa).

Substrate contacts are provided by residues 49–52 (TCNR), Ser117, 122–124 (EPQ), and Gln128. The Nucleophile role is filled by Cys50. 202 to 207 (GAGETI) is an NADP(+) binding site.

It belongs to the glutamyl-tRNA reductase family. Homodimer.

The catalysed reaction is (S)-4-amino-5-oxopentanoate + tRNA(Glu) + NADP(+) = L-glutamyl-tRNA(Glu) + NADPH + H(+). Its pathway is porphyrin-containing compound metabolism; protoporphyrin-IX biosynthesis; 5-aminolevulinate from L-glutamyl-tRNA(Glu): step 1/2. In terms of biological role, catalyzes the NADPH-dependent reduction of glutamyl-tRNA(Glu) to glutamate 1-semialdehyde (GSA). In Mannheimia succiniciproducens (strain KCTC 0769BP / MBEL55E), this protein is Glutamyl-tRNA reductase.